Reading from the N-terminus, the 424-residue chain is Arogenate dehydratase 4, chloroplastic (424 aa).

A chloroplast-targeting transit peptide spans 1–34; sequence MQAATSCDLKFRSTDPTSRNKCFSHAIPKRVAVT. The Prephenate dehydratase domain maps to 126-303; the sequence is RVAYQGVPGA…NVTRFLMLAR (178 aa). In terms of domain architecture, ACT spans 319–410; that stretch reads VFAAQEHKGT…SFLRVLGSYP (92 aa).

In terms of tissue distribution, expressed in roots, leaves, stems, flowers and siliques. More abundant in stems and roots.

The protein localises to the plastid. The protein resides in the chloroplast stroma. It catalyses the reaction L-arogenate + H(+) = L-phenylalanine + CO2 + H2O. Its pathway is amino-acid biosynthesis; L-phenylalanine biosynthesis; L-phenylalanine from L-arogenate: step 1/1. Converts the prephenate produced from the shikimate-chorismate pathway into phenylalanine. The protein is Arogenate dehydratase 4, chloroplastic of Arabidopsis thaliana (Mouse-ear cress).